The primary structure comprises 202 residues: Xanthine phosphoribosyltransferase (202 aa).

Residues leucine 20 and asparagine 27 each contribute to the xanthine site. A 5-phospho-alpha-D-ribose 1-diphosphate-binding site is contributed by 128–132; that stretch reads ASGGT. Residue lysine 156 coordinates xanthine.

This sequence belongs to the purine/pyrimidine phosphoribosyltransferase family. Xpt subfamily. In terms of assembly, homodimer.

The protein resides in the cytoplasm. It carries out the reaction XMP + diphosphate = xanthine + 5-phospho-alpha-D-ribose 1-diphosphate. Its pathway is purine metabolism; XMP biosynthesis via salvage pathway; XMP from xanthine: step 1/1. Converts the preformed base xanthine, a product of nucleic acid breakdown, to xanthosine 5'-monophosphate (XMP), so it can be reused for RNA or DNA synthesis. This Deinococcus geothermalis (strain DSM 11300 / CIP 105573 / AG-3a) protein is Xanthine phosphoribosyltransferase.